A 117-amino-acid chain; its full sequence is Large ribosomal subunit protein bL19 (117 aa).

It belongs to the bacterial ribosomal protein bL19 family.

In terms of biological role, this protein is located at the 30S-50S ribosomal subunit interface and may play a role in the structure and function of the aminoacyl-tRNA binding site. The chain is Large ribosomal subunit protein bL19 from Phocaeicola vulgatus (strain ATCC 8482 / DSM 1447 / JCM 5826 / CCUG 4940 / NBRC 14291 / NCTC 11154) (Bacteroides vulgatus).